The chain runs to 373 residues: Aromatic amino acid aminotransferase (373 aa).

Lysine 212 bears the N6-(pyridoxal phosphate)lysine mark.

The protein belongs to the class-II pyridoxal-phosphate-dependent aminotransferase family. Homodimer. The cofactor is pyridoxal 5'-phosphate.

The catalysed reaction is an aromatic L-alpha-amino acid + 2-oxoglutarate = an aromatic oxo-acid + L-glutamate. Functionally, aminotransferase that catalyzes the conversion of aromatic amino acids and 2-oxoglutarate into corresponding aromatic oxo acids and L-glutamate. The protein is Aromatic amino acid aminotransferase of Corynebacterium jeikeium (strain K411).